The sequence spans 416 residues: Trifolitoxin-processing protein TfxD (416 aa).

Transmembrane regions (helical) follow at residues 24-44, 48-68, 79-99, 114-134, 153-173, 176-196, 230-250, 255-275, 295-315, 322-342, and 372-392; these read MIPNVADTIVVTLIGATALQV, VLITILTLNIAFLNFCSLICM, VFAAIVRAACMMIGVYLALIA, IAFIALSALRPFVAGWNAYCA, SSLIYAGVNLLFVGLSHFAGT, SIISLLIGVYLALFHNALAYA, ASFINMLEMGFLALVGWVVAA, IAVFYFPFFTLVELTSGLAIG, VLIAVYSTYSLLCFLIYVGLI, IFALPLSLAGLALLFLICDGL, and VILALAAVLGSVQALAIALVL.

It is found in the cell membrane. Its function is as follows. The actions of the proteins TfxB, TfxD and TfxF are implicated in the processing of the inactive trifolitoxin (TfxA) precursor into the active peptide. The polypeptide is Trifolitoxin-processing protein TfxD (tfxD) (Rhizobium leguminosarum bv. trifolii).